Here is a 178-residue protein sequence, read N- to C-terminus: Caveolin-1 (178 aa).

Residue Ser2 is modified to N-acetylserine. At Ser2 the chain carries Phosphoserine. The required for homooligomerization stretch occupies residues Ser2–Val94. Over Ser2 to Ser104 the chain is Cytoplasmic. At Lys5 the chain carries N6-acetyllysine; alternate. Lys5 participates in a covalent cross-link: Glycyl lysine isopeptide (Lys-Gly) (interchain with G-Cter in ubiquitin); alternate. The residue at position 6 (Tyr6) is a Phosphotyrosine. Ser9 carries the phosphoserine modification. Phosphotyrosine; by ABL1 is present on Tyr14. Position 25 is a phosphotyrosine (Tyr25). Residues Lys26 and Lys30 each participate in a glycyl lysine isopeptide (Lys-Gly) (interchain with G-Cter in ubiquitin) cross-link. Ser37 is modified (phosphoserine). Residues Lys39, Lys47, and Lys57 each participate in a glycyl lysine isopeptide (Lys-Gly) (interchain with G-Cter in ubiquitin) cross-link. An interaction with CAVIN3 region spans residues Asp82–Val94. An intramembrane region (helical) is located at residues Ala105–Leu125. Topologically, residues His126–Ile178 are cytoplasmic. Residues Val131–Gln142 are interacts with SPRY1, SPRY2, SPRY3 and SPRY4. 3 S-palmitoyl cysteine lipidation sites follow: Cys133, Cys143, and Cys156. The tract at residues Ser149 to Phe160 is interacts with SPRY1, SPRY2, and SPRY4. The interacts with SPRY1, SPRY2, SPRY3 and SPRY4 stretch occupies residues Phe167–Ile178.

The protein belongs to the caveolin family. Homooligomer. Interacts with GLIPR2. Interacts with NOSTRIN. Interacts with SNAP25 and STX1A. Interacts (via the N-terminus) with DPP4; the interaction is direct. Interacts with CTNNB1, CDH1 and JUP. Interacts with PACSIN2; this interaction induces membrane tubulation. Interacts with SLC7A9. Interacts with BMX and BTK. Interacts with TGFBR1. Interacts with CAVIN3 (via leucine-zipper domain) in a cholesterol-sensitive manner. Interacts with CAVIN1. Interacts with EHD2 in a cholesterol-dependent manner. Forms a ternary complex with UBXN6 and VCP; mediates CAV1 targeting to lysosomes for degradation. Interacts with ABCG1; this interaction regulates ABCG1-mediated cholesterol efflux. Interacts with NEU3; this interaction enhances NEU3 sialidase activity within caveola. Interacts (via C-terminus) with SPRY1, SPRY2 (via C-terminus), SPRY3, and SPRY4. Interacts with IGFBP5; this interaction allows trafficking of IGFBP5 from the plasma membrane to the nucleus. Post-translationally, phosphorylated at Tyr-14 by ABL1 in response to oxidative stress. Ubiquitinated. Undergo monoubiquitination and multi- and/or polyubiquitination. Monoubiquitination of N-terminal lysines promotes integration in a ternary complex with UBXN6 and VCP which promotes oligomeric CAV1 targeting to lysosomes for degradation. Ubiquitinated by ZNRF1; leading to degradation and modulation of the TLR4-mediated immune response.

Its subcellular location is the golgi apparatus membrane. The protein resides in the cell membrane. It localises to the membrane. The protein localises to the caveola. It is found in the membrane raft. Its function is as follows. May act as a scaffolding protein within caveolar membranes. Forms a stable heterooligomeric complex with CAV2 that targets to lipid rafts and drives caveolae formation. Mediates the recruitment of CAVIN proteins (CAVIN1/2/3/4) to the caveolae. Interacts directly with G-protein alpha subunits and can functionally regulate their activity. Involved in the costimulatory signal essential for T-cell receptor (TCR)-mediated T-cell activation. Its binding to DPP4 induces T-cell proliferation and NF-kappa-B activation in a T-cell receptor/CD3-dependent manner. Recruits CTNNB1 to caveolar membranes and may regulate CTNNB1-mediated signaling through the Wnt pathway. Negatively regulates TGFB1-mediated activation of SMAD2/3 by mediating the internalization of TGFBR1 from membrane rafts leading to its subsequent degradation. Binds 20(S)-hydroxycholesterol (20(S)-OHC). The sequence is that of Caveolin-1 (CAV1) from Saimiri boliviensis boliviensis (Bolivian squirrel monkey).